The following is a 445-amino-acid chain: KIN17-like protein (445 aa).

A C2H2-type zinc finger spans residues 26–50; it reads WYCQLCEKQCRDENGFKCHISSESH. Low complexity-rich tracts occupy residues 215–229 and 239–253; these read NTTT…TTTN and NDNN…DQTN. A disordered region spans residues 215–256; sequence NTTTTTTNTTTTTTNKNIFDKLKTNDNNSSNNNYNDQTNPKP.

It belongs to the KIN17 family.

The polypeptide is KIN17-like protein (Dictyostelium discoideum (Social amoeba)).